Reading from the N-terminus, the 419-residue chain is Sulfate adenylyltransferase (419 aa).

Belongs to the sulfate adenylyltransferase family.

The enzyme catalyses sulfate + ATP + H(+) = adenosine 5'-phosphosulfate + diphosphate. It functions in the pathway sulfur metabolism; hydrogen sulfide biosynthesis; sulfite from sulfate: step 1/3. The protein is Sulfate adenylyltransferase of Psychrobacter sp. (strain PRwf-1).